A 235-amino-acid chain; its full sequence is Probable transcriptional regulatory protein CFF8240_0424 (235 aa).

Belongs to the TACO1 family.

It is found in the cytoplasm. The chain is Probable transcriptional regulatory protein CFF8240_0424 from Campylobacter fetus subsp. fetus (strain 82-40).